We begin with the raw amino-acid sequence, 367 residues long: Undecaprenyl-phosphate alpha-N-acetylglucosaminyl 1-phosphate transferase (367 aa).

10 helical membrane-spanning segments follow: residues 3–23 (LLTV…FLFF), 46–66 (LIPL…FGIV), 69–89 (YIPH…IGAL), 132–152 (VLGP…INAF), 158–178 (IDGL…MILW), 187–207 (IWCF…LGIL), 213–233 (VFMG…ILLE), 242–262 (ISPV…VAIM), 294–314 (AFVL…LAEY), and 318–338 (VPEW…GYCI).

The protein belongs to the glycosyltransferase 4 family. WecA subfamily. The cofactor is Mg(2+). It depends on Mn(2+) as a cofactor.

It is found in the cell inner membrane. It carries out the reaction di-trans,octa-cis-undecaprenyl phosphate + UDP-N-acetyl-alpha-D-glucosamine = N-acetyl-alpha-D-glucosaminyl-di-trans,octa-cis-undecaprenyl diphosphate + UMP. The protein operates within bacterial outer membrane biogenesis; LPS O-antigen biosynthesis. It functions in the pathway bacterial outer membrane biogenesis; enterobacterial common antigen biosynthesis. In terms of biological role, catalyzes the transfer of the GlcNAc-1-phosphate moiety from UDP-GlcNAc onto the carrier lipid undecaprenyl phosphate (C55-P), yielding GlcNAc-pyrophosphoryl-undecaprenyl (GlcNAc-PP-C55). The protein is Undecaprenyl-phosphate alpha-N-acetylglucosaminyl 1-phosphate transferase of Escherichia coli O6:H1 (strain CFT073 / ATCC 700928 / UPEC).